Consider the following 551-residue polypeptide: Calnexin (551 aa).

The first 23 residues, 1–23 (MRPQNVAGVAGTGALIMAAGALA), serve as a signal peptide directing secretion. The Lumenal segment spans residues 24–477 (DQTVFHPTSL…QAIKQMPEVA (454 aa)). The interval 293 to 315 (EEEPETIPDPEAEKPEEWDDEED) is disordered. Residues 478–498 (AGLAAAVFTLLGMLLALFGFI) form a helical membrane-spanning segment. Over 499–551 (GSAPTKVKQTTVKTKAVAPVAPAGEEEKKALDQAGVEIPAEGSKKRVTRSTKE) the chain is Cytoplasmic. The segment at 526-551 (KKALDQAGVEIPAEGSKKRVTRSTKE) is disordered.

The protein belongs to the calreticulin family.

It is found in the endoplasmic reticulum membrane. Endoplasmic reticulum (ER) chaperone that functions to stabilize non-native glycoproteins and retain them in the ER until they are properly folded or targeted for ER associated degradation (ERAD). With co-chaperone DNJ1, coordinately maintains ER homeostasis and contributes to maintenance of cell wall architecture. The polypeptide is Calnexin (Cryptococcus neoformans var. grubii serotype A (strain H99 / ATCC 208821 / CBS 10515 / FGSC 9487) (Filobasidiella neoformans var. grubii)).